A 331-amino-acid polypeptide reads, in one-letter code: UBX domain-containing protein 2B (331 aa).

Basic and acidic residues-rich tracts occupy residues 1 to 16 and 37 to 48; these read MAEG…ERGS and DEMKCKSSKPDR. A disordered region spans residues 1–70; the sequence is MAEGGRAEPE…PHRLYSGDHK (70 aa). Residue Ala2 is modified to N-acetylalanine. The residue at position 56 (Ser56) is a Phosphoserine. Position 59 is a phosphothreonine (Thr59). Ser66 bears the Phosphoserine mark. The SEP domain occupies 141 to 206; sequence DVQVLLKLWR…MEDHQDQEYI (66 aa). Phosphoserine occurs at positions 231, 234, and 235. Residues 252 to 329 form the UBX domain; sequence DSMPTTKIQI…DILNTVILQQ (78 aa).

It belongs to the NSFL1C family. As to quaternary structure, interacts with VCP. Does not bind ubiquitin.

The protein resides in the nucleus. The protein localises to the cytoplasm. Its subcellular location is the cytosol. It is found in the endoplasmic reticulum. It localises to the golgi apparatus. The protein resides in the cytoskeleton. The protein localises to the microtubule organizing center. Its subcellular location is the centrosome. Its function is as follows. Adapter protein required for Golgi and endoplasmic reticulum biogenesis. Involved in Golgi and endoplasmic reticulum maintenance during interphase and in their reassembly at the end of mitosis. The complex formed with VCP has membrane fusion activity; membrane fusion activity requires USO1-GOLGA2 tethering and BET1L. VCPIP1 is also required, but not its deubiquitinating activity. Together with NSFL1C/p47, regulates the centrosomal levels of kinase AURKA/Aurora A during mitotic progression by promoting AURKA removal from centrosomes in prophase. Also, regulates spindle orientation during mitosis. The polypeptide is UBX domain-containing protein 2B (Ubxn2b) (Mus musculus (Mouse)).